A 246-amino-acid polypeptide reads, in one-letter code: 5'-nucleotidase SurE (246 aa).

A divalent metal cation contacts are provided by Asp-8, Asp-9, Ser-39, and Asn-91.

The protein belongs to the SurE nucleotidase family. A divalent metal cation serves as cofactor.

It localises to the cytoplasm. It catalyses the reaction a ribonucleoside 5'-phosphate + H2O = a ribonucleoside + phosphate. Its function is as follows. Nucleotidase that shows phosphatase activity on nucleoside 5'-monophosphates. This chain is 5'-nucleotidase SurE, found in Actinobacillus succinogenes (strain ATCC 55618 / DSM 22257 / CCUG 43843 / 130Z).